Here is a 476-residue protein sequence, read N- to C-terminus: Eukaryotic translation initiation factor 3 subunit L (476 aa).

The 196-residue stretch at 257 to 452 (DAIRMFSHIL…DLDYALEKDL (196 aa)) folds into the PCI domain.

The protein belongs to the eIF-3 subunit L family. Component of the eukaryotic translation initiation factor 3 (eIF-3) complex.

The protein resides in the cytoplasm. Its function is as follows. Component of the eukaryotic translation initiation factor 3 (eIF-3) complex, which is involved in protein synthesis of a specialized repertoire of mRNAs and, together with other initiation factors, stimulates binding of mRNA and methionyl-tRNAi to the 40S ribosome. The eIF-3 complex specifically targets and initiates translation of a subset of mRNAs involved in cell proliferation. This Aspergillus terreus (strain NIH 2624 / FGSC A1156) protein is Eukaryotic translation initiation factor 3 subunit L.